Reading from the N-terminus, the 142-residue chain is Large ribosomal subunit protein uL11 (142 aa).

This sequence belongs to the universal ribosomal protein uL11 family. Part of the ribosomal stalk of the 50S ribosomal subunit. Interacts with L10 and the large rRNA to form the base of the stalk. L10 forms an elongated spine to which L12 dimers bind in a sequential fashion forming a multimeric L10(L12)X complex. Post-translationally, one or more lysine residues are methylated.

In terms of biological role, forms part of the ribosomal stalk which helps the ribosome interact with GTP-bound translation factors. This chain is Large ribosomal subunit protein uL11, found in Desulfitobacterium hafniense (strain DSM 10664 / DCB-2).